Consider the following 424-residue polypeptide: Cyclin-dependent kinase D-1 (424 aa).

One can recognise a Protein kinase domain in the interval 19–299 (YLKREVLGEG…AQQALEHRYF (281 aa)). ATP contacts are provided by residues 25-33 (LGEGTYGVV) and Lys48. Position 29 is a phosphothreonine (Thr29). At Tyr30 the chain carries Phosphotyrosine. Asp141 functions as the Proton acceptor in the catalytic mechanism. Residue Ser168 is modified to Phosphoserine. Position 174 is a phosphothreonine (Thr174). Disordered regions lie at residues 303–337 (PAPTKPSQLPRPPPKGDSGNNKIPDLNLQDGPVVL) and 359–424 (ADRT…GYTE). Residues 359 to 374 (ADRTEEHPSGARHMDD) are compositionally biased toward basic and acidic residues.

It belongs to the protein kinase superfamily. CMGC Ser/Thr protein kinase family. CDC2/CDKX subfamily. As to quaternary structure, interacts with CYCH1-1. In terms of tissue distribution, expressed in actively dividing cells of roots, leaves and shoots. Expressed in the intercalary meristem and the elongation zone of internodes.

The protein resides in the nucleus. It carries out the reaction L-seryl-[protein] + ATP = O-phospho-L-seryl-[protein] + ADP + H(+). The catalysed reaction is L-threonyl-[protein] + ATP = O-phospho-L-threonyl-[protein] + ADP + H(+). The enzyme catalyses [DNA-directed RNA polymerase] + ATP = phospho-[DNA-directed RNA polymerase] + ADP + H(+). Functionally, CDK-activating kinase that may control G1/S phase progression. May control the rate of cell differentiation to accomplish proper development of organs, or in response to a changing environment. Forms a complex with cyclin CYCH1-1 that phosphorylates CDKA-1 and the C-terminal domain (CTD) of the large subunit of RNA polymerase II. This chain is Cyclin-dependent kinase D-1 (CDKD-1), found in Oryza sativa subsp. japonica (Rice).